The following is a 155-amino-acid chain: SsrA-binding protein (155 aa).

Belongs to the SmpB family.

The protein localises to the cytoplasm. In terms of biological role, required for rescue of stalled ribosomes mediated by trans-translation. Binds to transfer-messenger RNA (tmRNA), required for stable association of tmRNA with ribosomes. tmRNA and SmpB together mimic tRNA shape, replacing the anticodon stem-loop with SmpB. tmRNA is encoded by the ssrA gene; the 2 termini fold to resemble tRNA(Ala) and it encodes a 'tag peptide', a short internal open reading frame. During trans-translation Ala-aminoacylated tmRNA acts like a tRNA, entering the A-site of stalled ribosomes, displacing the stalled mRNA. The ribosome then switches to translate the ORF on the tmRNA; the nascent peptide is terminated with the 'tag peptide' encoded by the tmRNA and targeted for degradation. The ribosome is freed to recommence translation, which seems to be the essential function of trans-translation. The sequence is that of SsrA-binding protein from Bordetella bronchiseptica (strain ATCC BAA-588 / NCTC 13252 / RB50) (Alcaligenes bronchisepticus).